A 320-amino-acid chain; its full sequence is Phosphatidylserine decarboxylase proenzyme (320 aa).

Residues Asp-90, His-147, and Ser-254 each act as charge relay system; for autoendoproteolytic cleavage activity in the active site. Ser-254 (schiff-base intermediate with substrate; via pyruvic acid; for decarboxylase activity) is an active-site residue. Ser-254 bears the Pyruvic acid (Ser); by autocatalysis mark. The interval 290 to 320 (TAAAEPAPLPEEEIRAEHRASPLVDDKQDQG) is disordered. Residues 301 to 320 (EEIRAEHRASPLVDDKQDQG) show a composition bias toward basic and acidic residues.

This sequence belongs to the phosphatidylserine decarboxylase family. PSD-B subfamily. Prokaryotic type I sub-subfamily. As to quaternary structure, heterodimer of a large membrane-associated beta subunit and a small pyruvoyl-containing alpha subunit. The cofactor is pyruvate. Is synthesized initially as an inactive proenzyme. Formation of the active enzyme involves a self-maturation process in which the active site pyruvoyl group is generated from an internal serine residue via an autocatalytic post-translational modification. Two non-identical subunits are generated from the proenzyme in this reaction, and the pyruvate is formed at the N-terminus of the alpha chain, which is derived from the carboxyl end of the proenzyme. The autoendoproteolytic cleavage occurs by a canonical serine protease mechanism, in which the side chain hydroxyl group of the serine supplies its oxygen atom to form the C-terminus of the beta chain, while the remainder of the serine residue undergoes an oxidative deamination to produce ammonia and the pyruvoyl prosthetic group on the alpha chain. During this reaction, the Ser that is part of the protease active site of the proenzyme becomes the pyruvoyl prosthetic group, which constitutes an essential element of the active site of the mature decarboxylase.

Its subcellular location is the cell membrane. The catalysed reaction is a 1,2-diacyl-sn-glycero-3-phospho-L-serine + H(+) = a 1,2-diacyl-sn-glycero-3-phosphoethanolamine + CO2. The protein operates within phospholipid metabolism; phosphatidylethanolamine biosynthesis; phosphatidylethanolamine from CDP-diacylglycerol: step 2/2. In terms of biological role, catalyzes the formation of phosphatidylethanolamine (PtdEtn) from phosphatidylserine (PtdSer). The polypeptide is Phosphatidylserine decarboxylase proenzyme (Klebsiella pneumoniae subsp. pneumoniae (strain ATCC 700721 / MGH 78578)).